Consider the following 360-residue polypeptide: Cannabinoid receptor 2 (360 aa).

Topologically, residues methionine 1–glutamine 33 are extracellular. The N-linked (GlcNAc...) asparagine glycan is linked to asparagine 11. Residues isoleucine 34–leucine 59 form a helical membrane-spanning segment. The Cytoplasmic portion of the chain corresponds to serine 60 to leucine 71. Residues phenylalanine 72–valine 92 form a helical membrane-spanning segment. The Extracellular portion of the chain corresponds to isoleucine 93 to asparagine 104. The helical transmembrane segment at isoleucine 105–valine 129 threads the bilayer. Topologically, residues aspartate 130 to arginine 149 are cytoplasmic. A helical transmembrane segment spans residues alanine 150–tryptophan 172. The Extracellular segment spans residues threonine 173 to asparagine 188. The helical transmembrane segment at aspartate 189–tryptophan 214 threads the bilayer. Residues lysine 215–threonine 246 are Cytoplasmic-facing. A helical membrane pass occupies residues leucine 247–histidine 267. At serine 268–glutamate 279 the chain is on the extracellular side. The helical transmembrane segment at alanine 280–leucine 301 threads the bilayer. Residues arginine 302–cysteine 360 lie on the Cytoplasmic side of the membrane. Residues glutamate 327 to cysteine 360 are disordered. Phosphoserine is present on residues serine 335 and serine 336. A Phosphothreonine modification is found at threonine 338. Residues glycine 349 to cysteine 360 show a composition bias toward polar residues. At serine 352 the chain carries Phosphoserine.

Belongs to the G-protein coupled receptor 1 family. In terms of processing, constitutively phosphorylated on Ser-352; phosphorylation increases cell internalization and desensitizes the receptor. In terms of tissue distribution, expressed in spleen and brain by neurons and glial cells (at protein level). Expressed in lung, testis and thymus but not in heart, liver or kidney. Expressed in cerebellum, cortex and brainstem.

The protein localises to the cell membrane. It localises to the cell projection. The protein resides in the dendrite. Its subcellular location is the perikaryon. In terms of biological role, heterotrimeric G protein-coupled receptor for endocannabinoid 2-arachidonoylglycerol mediating inhibition of adenylate cyclase. May function in inflammatory response, nociceptive transmission and bone homeostasis. The sequence is that of Cannabinoid receptor 2 (Cnr2) from Rattus norvegicus (Rat).